The following is a 131-amino-acid chain: Olfactory receptor-like protein COR9 (131 aa).

The Cytoplasmic segment spans residues 1 to 16 (VAICSPLLYSTVMTKR). A helical transmembrane segment spans residues 17–41 (VCMQLVVGSYMGGLLNSLTHTCGLL). At 42 to 82 (GLPFCGPNVINHYFCDIPPLLQLACSDTHRNETLLLAFSAV) the chain is on the extracellular side. A glycan (N-linked (GlcNAc...) asparagine) is linked at asparagine 72. Residues 83–103 (IALFTLFVITASYMLILSVIL) form a helical membrane-spanning segment. At 104 to 116 (KIQSDDGRKKTFH) the chain is on the cytoplasmic side. Residues 117 to 131 (TCASHLTAITIFFGS) traverse the membrane as a helical segment.

It belongs to the G-protein coupled receptor 1 family.

The protein resides in the cell membrane. Functionally, odorant receptor. The protein is Olfactory receptor-like protein COR9 (COR9) of Gallus gallus (Chicken).